The chain runs to 658 residues: ATP-dependent DNA helicase Rep (658 aa).

Positions 1–280 constitute a UvrD-like helicase ATP-binding domain; the sequence is MSLNFNQKNA…IKMEQNYRSY (280 aa). ATP is bound by residues 22 to 29 and Arg278; that span reads AGAGSGKT. Residues 281–564 enclose the UvrD-like helicase C-terminal domain; the sequence is GRILKAANKL…QLMTLHSSKG (284 aa).

Belongs to the helicase family. UvrD subfamily. In terms of assembly, homodimer.

The enzyme catalyses Couples ATP hydrolysis with the unwinding of duplex DNA by translocating in the 3'-5' direction.. The catalysed reaction is ATP + H2O = ADP + phosphate + H(+). In terms of biological role, rep helicase is a single-stranded DNA-dependent ATPase involved in DNA replication; it can initiate unwinding at a nick in the DNA. It binds to the single-stranded DNA and acts in a progressive fashion along the DNA in the 3' to 5' direction. This is ATP-dependent DNA helicase Rep from Buchnera aphidicola subsp. Schizaphis graminum (strain Sg).